Reading from the N-terminus, the 424-residue chain is Serine hydroxymethyltransferase (424 aa).

(6S)-5,6,7,8-tetrahydrofolate is bound by residues Leu113 and Gly117–Leu119. N6-(pyridoxal phosphate)lysine is present on Lys222. Ser361–Phe363 lines the (6S)-5,6,7,8-tetrahydrofolate pocket.

The protein belongs to the SHMT family. In terms of assembly, homodimer. It depends on pyridoxal 5'-phosphate as a cofactor.

Its subcellular location is the cytoplasm. It carries out the reaction (6R)-5,10-methylene-5,6,7,8-tetrahydrofolate + glycine + H2O = (6S)-5,6,7,8-tetrahydrofolate + L-serine. The protein operates within one-carbon metabolism; tetrahydrofolate interconversion. It participates in amino-acid biosynthesis; glycine biosynthesis; glycine from L-serine: step 1/1. Its function is as follows. Catalyzes the reversible interconversion of serine and glycine with tetrahydrofolate (THF) serving as the one-carbon carrier. This reaction serves as the major source of one-carbon groups required for the biosynthesis of purines, thymidylate, methionine, and other important biomolecules. Also exhibits THF-independent aldolase activity toward beta-hydroxyamino acids, producing glycine and aldehydes, via a retro-aldol mechanism. The polypeptide is Serine hydroxymethyltransferase (Flavobacterium psychrophilum (strain ATCC 49511 / DSM 21280 / CIP 103535 / JIP02/86)).